The primary structure comprises 273 residues: Large ribosomal subunit protein uL2 (273 aa).

Residues 213–261 (WLGKRPQSRGVAMNPVDHPHGGGEGKSSGGRHPVTPWGVPTKGYKTRVN) form a disordered region.

The protein belongs to the universal ribosomal protein uL2 family. In terms of assembly, part of the 50S ribosomal subunit. Forms a bridge to the 30S subunit in the 70S ribosome.

One of the primary rRNA binding proteins. Required for association of the 30S and 50S subunits to form the 70S ribosome, for tRNA binding and peptide bond formation. It has been suggested to have peptidyltransferase activity; this is somewhat controversial. Makes several contacts with the 16S rRNA in the 70S ribosome. In Syntrophotalea carbinolica (strain DSM 2380 / NBRC 103641 / GraBd1) (Pelobacter carbinolicus), this protein is Large ribosomal subunit protein uL2.